The sequence spans 953 residues: 26S proteasome non-ATPase regulatory subunit 1 (953 aa).

At Met1 the chain carries N-acetylmethionine; partial. Phosphothreonine is present on Thr273. Residues 279 to 318 (PGSTNTGTVPGSEKDSDSMETEEKTGSAFVGKTPEASPEP) are disordered. Ser290 is modified (phosphoserine). Positions 290–303 (SEKDSDSMETEEKT) are enriched in basic and acidic residues. Lys310 carries the post-translational modification N6-acetyllysine. The residue at position 311 (Thr311) is a Phosphothreonine. Ser315 bears the Phosphoserine mark. PC repeat units lie at residues 403 to 436 (TATASLGVIHKGHEKEALQLMATYLPKDTSPGSA), 441 to 474 (GGLYALGLIHANHGGDIIDYLLNQLKNASNDIVR), 476 to 510 (GGSLGLGLAAMGTARQDVYDLLKTNLYQDDAVTGE), 511 to 545 (AAGLALGLVMLGSKNAQAIEDMVGYAQETQHEKIL), 547 to 580 (GLAVGIALVMYGRMEEADALIESLCRDKDPILRR), 581 to 616 (SGMYTVAMAYCGSGNNKAIRRLLHVAVSDVNDDVRR), 617 to 649 (AAVESLGFILFRTPEQCPSVVSLLSESYNPHVR), 651 to 685 (GAAMALGICCAGTGNKEAINLLEPMTNDPVNYVRQ), 686 to 726 (GALI…DVMA), and 729 to 761 (GAILAQGILDAGGHNVTISLQSRTGHTHMPSVV). The residue at position 720 (Lys720) is an N6-acetyllysine. Thr830 is subject to Phosphothreonine. Ser834 bears the Phosphoserine mark. 2 disordered regions span residues 839–881 (AKKK…LDNP) and 930–953 (AHGPKIEEEEQEPEPPEPFEYIDD). Composition is skewed to basic and acidic residues over residues 842–852 (KEKEKEKKEEE) and 859–872 (AEKKEEKEKKKEPE). Over residues 936 to 953 (EEEEQEPEPPEPFEYIDD) the composition is skewed to acidic residues.

It belongs to the proteasome subunit S1 family. Component of the 19S proteasome regulatory particle complex. The 26S proteasome consists of a 20S core particle (CP) and two 19S regulatory subunits (RP). The regulatory particle is made of a lid composed of 9 subunits, a base containing 6 ATPases and few additional components including PSMD1. Interacts with ADRM1. Interacts with ZFAND1.

Component of the 26S proteasome, a multiprotein complex involved in the ATP-dependent degradation of ubiquitinated proteins. This complex plays a key role in the maintenance of protein homeostasis by removing misfolded or damaged proteins, which could impair cellular functions, and by removing proteins whose functions are no longer required. Therefore, the proteasome participates in numerous cellular processes, including cell cycle progression, apoptosis, or DNA damage repair. This chain is 26S proteasome non-ATPase regulatory subunit 1 (PSMD1), found in Pongo abelii (Sumatran orangutan).